Consider the following 315-residue polypeptide: Gamma-hemolysin component C (315 aa).

Positions 1 to 29 (MLKNKILTTTLSVSLLAPLANPLLENAKA) are cleaved as a signal peptide.

The protein belongs to the aerolysin family. As to quaternary structure, toxicity requires sequential binding and synergistic association of a class S and a class F component which form heterooligomeric complexes. HlgB (class F) associates with either hlgA thus forming an AB toxin or with hlgC thus forming a CB toxin.

It is found in the secreted. Toxin that seems to act by forming pores in the membrane of the cell. Has a hemolytic and a leucotoxic activity. In Staphylococcus aureus (strain NCTC 8325 / PS 47), this protein is Gamma-hemolysin component C (hlgC).